Reading from the N-terminus, the 540-residue chain is Chaperonin GroEL (540 aa).

ATP-binding positions include 30–33 (TLGP), lysine 51, 87–91 (DGTTT), glycine 415, and aspartate 495.

The protein belongs to the chaperonin (HSP60) family. Forms a cylinder of 14 subunits composed of two heptameric rings stacked back-to-back. Interacts with the co-chaperonin GroES.

The protein localises to the cytoplasm. It catalyses the reaction ATP + H2O + a folded polypeptide = ADP + phosphate + an unfolded polypeptide.. Together with its co-chaperonin GroES, plays an essential role in assisting protein folding. The GroEL-GroES system forms a nano-cage that allows encapsulation of the non-native substrate proteins and provides a physical environment optimized to promote and accelerate protein folding. The sequence is that of Chaperonin GroEL from Erwinia aphidicola.